The chain runs to 714 residues: MASATTLLFHHGSTRVLVARRRCQASVLRPYGGLKPFLSFCSLPNSTAPFRDSLRAKSDGLARAYVTGAPPIVEEPDPKIEESKSEAESKDLISWGLLWSLMSKHKLRLSVCLLTLLGCSTCTLSMPVFSGRFFEVLIGVRPEPLWRLLSKIAVLYSLEPIFTIAFVTNMTAIWENVMAILRAQIFRRVLIQKAEFFDKYKVGELTGLLTSDLGALNSIVNDNISRDRGFRAFTEVFGTICILFTLSPQLAPVLGLLMLAVSVLVAVYKRSTVPVYKSHGLAQATMSDCVSETFSAIRTVRSFSGEKRQMSIFGSQILAYKLSGLKLGTFKSINESITRVAVYISLLALYCLGGSKVKTGELAVGTVVSFIGYTFTLTFAVQGLVNTFGDLRGTFAAIDRINSILNAVDIDEALAYGLERDIHTKKVQDENLKLFLSAGPNVNIRHLDKYYMSNLKSTNNLRTLTWAGDVCLDDVHFAYPLRPDVKVLDGLSLTLNSGTVTALVGSSGAGKSTIVQLLARFYEPTQGRITVGGEDVRMFDKSEWAKVVSIVNQEPVLFSLSVAENIAYGLPNEHVSKDDIIKAAKAANAHDFIISLPQGYDTLVGERGGLLSGGQRQRVAIARSLLKNAPILILDEATSALDAVSERLVQSALNRLMKDRTTLVIAHRLSTVQSANQIAVCSDGKIIELGTHSELVAQKGSYASLVGTQRLAFE.

A run of 5 helical transmembrane segments spans residues 109 to 129, 161 to 181, 240 to 260, 340 to 360, and 361 to 381; these read LSVC…MPVF, IFTI…MAIL, ICIL…LMLA, VAVY…VKTG, and ELAV…TFAV. An ABC transmembrane type-1 domain is found at 109–393; the sequence is LSVCLLTLLG…LVNTFGDLRG (285 aa). The region spanning 470–708 is the ABC transporter domain; it reads VCLDDVHFAY…KGSYASLVGT (239 aa). 505 to 512 lines the ATP pocket; the sequence is GSSGAGKS.

This sequence belongs to the ABC transporter superfamily. ABCB family. Multidrug resistance exporter (TC 3.A.1.201) subfamily.

The protein localises to the membrane. The polypeptide is ABC transporter B family member 28 (ABCB28) (Arabidopsis thaliana (Mouse-ear cress)).